We begin with the raw amino-acid sequence, 245 residues long: Probable inactive carboxylesterase Os04g0669700 (245 aa).

Active-site charge relay system residues include S115 and H201.

Belongs to the AB hydrolase superfamily. AB hydrolase 2 family.

The sequence is that of Probable inactive carboxylesterase Os04g0669700 from Oryza sativa subsp. japonica (Rice).